A 153-amino-acid chain; its full sequence is Large ribosomal subunit protein uL30 (153 aa).

It belongs to the universal ribosomal protein uL30 family. As to quaternary structure, part of the 50S ribosomal subunit.

The polypeptide is Large ribosomal subunit protein uL30 (Metallosphaera sedula (strain ATCC 51363 / DSM 5348 / JCM 9185 / NBRC 15509 / TH2)).